The following is a 385-amino-acid chain: ATP phosphoribosyltransferase regulatory subunit (385 aa).

It belongs to the class-II aminoacyl-tRNA synthetase family. HisZ subfamily. Heteromultimer composed of HisG and HisZ subunits.

Its subcellular location is the cytoplasm. The protein operates within amino-acid biosynthesis; L-histidine biosynthesis; L-histidine from 5-phospho-alpha-D-ribose 1-diphosphate: step 1/9. Functionally, required for the first step of histidine biosynthesis. May allow the feedback regulation of ATP phosphoribosyltransferase activity by histidine. The protein is ATP phosphoribosyltransferase regulatory subunit of Laribacter hongkongensis (strain HLHK9).